The sequence spans 291 residues: MTEFASRRTLVVRRFLRNRAAVASLAALLLLFVSAYALPPLLPYSYDDLDFNALLQPPGTKHWLGTNALGQDLLAQTLRGMQKSMLIGVCVAVISTGIAATVGAISGYFGGWRDRTLMWVVDLLLVVPSFILIAIVTPRTKNSANIMFLVLLLAGFGWMISSRMVRGMTMSLREREFIRAARYMGVSSRRIIVGHVVPNVASILIIDAALNVAAAILAETGLSFLGFGIQPPDVSLGTLIADGTASATAFPWVFLFPASILVLILVCANLTGDGLRDALDPASRSLRRGVR.

6 consecutive transmembrane segments (helical) span residues 22-42, 85-105, 116-136, 142-162, 209-229, and 247-267; these read VASLAALLLLFVSAYALPPLL, MLIGVCVAVISTGIAATVGAI, TLMWVVDLLLVVPSFILIAIV, NSANIMFLVLLLAGFGWMISS, ALNVAAAILAETGLSFLGFGI, and ATAFPWVFLFPASILVLILVC. The ABC transmembrane type-1 domain occupies 81–272; sequence MQKSMLIGVC…LILVCANLTG (192 aa).

Belongs to the binding-protein-dependent transport system permease family. OppBC subfamily. As to quaternary structure, the complex is composed of an ATP-binding protein (OppD), two transmembrane proteins (OppB and OppC) and a solute-binding protein (OppA).

The protein resides in the cell inner membrane. Functionally, part of the ABC transporter complex OppABCD involved in the uptake of oligopeptides. Responsible for the translocation of the substrate across the membrane. This is Oligopeptide transport system permease protein OppC from Mycobacterium bovis (strain ATCC BAA-935 / AF2122/97).